We begin with the raw amino-acid sequence, 238 residues long: Tyrosine recombinase XerD-like (238 aa).

The region spanning 1 to 75 (MKLPNEIEEY…SANQYFLFLY (75 aa)) is the Core-binding (CB) domain. Residues 90-238 (VQKKTQSSES…TITALEKYYR (149 aa)) enclose the Tyr recombinase domain. Catalysis depends on residues lysine 154 and arginine 204. The active-site O-(3'-phospho-DNA)-tyrosine intermediate is tyrosine 236.

This sequence belongs to the 'phage' integrase family. XerD-like subfamily.

It localises to the cytoplasm. Functionally, putative tyrosine recombinase. Not involved in the cutting and rejoining of the recombining DNA molecules on dif(SL) site. This is Tyrosine recombinase XerD-like from Lactococcus lactis subsp. cremoris (strain SK11).